The following is a 498-amino-acid chain: Glycerol kinase (498 aa).

Position 12 (T12) interacts with ADP. The ATP site is built by T12, T13, and S14. Residue T12 coordinates sn-glycerol 3-phosphate. R16 provides a ligand contact to ADP. Residues R82, E83, Y134, and D244 each contribute to the sn-glycerol 3-phosphate site. R82, E83, Y134, D244, and Q245 together coordinate glycerol. Positions 266 and 310 each coordinate ADP. Residues T266, G310, Q314, and G411 each coordinate ATP. Residues G411 and N415 each coordinate ADP.

Belongs to the FGGY kinase family.

The enzyme catalyses glycerol + ATP = sn-glycerol 3-phosphate + ADP + H(+). The protein operates within polyol metabolism; glycerol degradation via glycerol kinase pathway; sn-glycerol 3-phosphate from glycerol: step 1/1. Its activity is regulated as follows. Inhibited by fructose 1,6-bisphosphate (FBP). In terms of biological role, key enzyme in the regulation of glycerol uptake and metabolism. Catalyzes the phosphorylation of glycerol to yield sn-glycerol 3-phosphate. The polypeptide is Glycerol kinase (Chloroflexus aggregans (strain MD-66 / DSM 9485)).